The following is a 101-amino-acid chain: Small ribosomal subunit protein uS14 (101 aa).

It belongs to the universal ribosomal protein uS14 family. In terms of assembly, part of the 30S ribosomal subunit. Contacts proteins S3 and S10.

Binds 16S rRNA, required for the assembly of 30S particles and may also be responsible for determining the conformation of the 16S rRNA at the A site. The protein is Small ribosomal subunit protein uS14 of Leptothrix cholodnii (strain ATCC 51168 / LMG 8142 / SP-6) (Leptothrix discophora (strain SP-6)).